A 301-amino-acid polypeptide reads, in one-letter code: Homoserine O-acetyltransferase (301 aa).

Cys-142 serves as the catalytic Acyl-thioester intermediate. Positions 163 and 192 each coordinate substrate. The Proton acceptor role is filled by His-235. The active site involves Glu-237. A substrate-binding site is contributed by Arg-249.

The protein belongs to the MetA family.

Its subcellular location is the cytoplasm. It carries out the reaction L-homoserine + acetyl-CoA = O-acetyl-L-homoserine + CoA. Its pathway is amino-acid biosynthesis; L-methionine biosynthesis via de novo pathway; O-acetyl-L-homoserine from L-homoserine: step 1/1. Its function is as follows. Transfers an acetyl group from acetyl-CoA to L-homoserine, forming acetyl-L-homoserine. In Bacillus thuringiensis subsp. konkukian (strain 97-27), this protein is Homoserine O-acetyltransferase.